Reading from the N-terminus, the 376-residue chain is N-acetyldiaminopimelate deacetylase (376 aa).

Aspartate 69 is a catalytic residue. Catalysis depends on glutamate 128, which acts as the Proton acceptor.

Belongs to the peptidase M20A family. N-acetyldiaminopimelate deacetylase subfamily.

It carries out the reaction N-acetyl-(2S,6S)-2,6-diaminopimelate + H2O = (2S,6S)-2,6-diaminopimelate + acetate. The protein operates within amino-acid biosynthesis; L-lysine biosynthesis via DAP pathway; LL-2,6-diaminopimelate from (S)-tetrahydrodipicolinate (acetylase route): step 3/3. Catalyzes the conversion of N-acetyl-diaminopimelate to diaminopimelate and acetate. This chain is N-acetyldiaminopimelate deacetylase, found in Streptococcus pneumoniae serotype 4 (strain ATCC BAA-334 / TIGR4).